A 373-amino-acid chain; its full sequence is Thyroid hormone receptor beta (373 aa).

The interval 1–18 (MPSSMSGYIPSYLDKDEL) is modulating. Residues C19, C22, C36, C39, C57, C63, C73, and C76 each contribute to the Zn(2+) site. 2 NR C4-type zinc fingers span residues 19–39 (CVVC…CEGC) and 57–81 (CKYE…FKKC). The segment at residues 19–93 (CVVCGDKATG…VGMATDLVLD (75 aa)) is a DNA-binding region (nuclear receptor). Residues 129 to 373 (EEWELIQVVT…PPLFLEVFED (245 aa)) enclose the NR LBD domain. 3,3',5-triiodo-L-thyronine contacts are provided by R194, N243, and H347. L-thyroxine contacts are provided by R194, N243, and H347.

This sequence belongs to the nuclear hormone receptor family. NR1 subfamily.

It localises to the nucleus. Functionally, nuclear hormone receptor that can act as a repressor or activator of transcription. High affinity receptor for thyroid hormones, including triiodothyronine and thyroxine. This is Thyroid hormone receptor beta (thrb) from Aquarana catesbeiana (American bullfrog).